A 194-amino-acid chain; its full sequence is Adenylate kinase (194 aa).

10-15 is a binding site for ATP; the sequence is GAGKGT. An NMP region spans residues 30–59; it reads STGDMLRAAVAQQSEIGKRAKAVMDAGQLV. AMP is bound by residues Thr31, Arg36, 57 to 59, 85 to 88, and Gln92; these read QLV and GYPR. The interval 126–142 is LID; it reads SRVAETIAKGGQVRSDD. ATP is bound at residue Arg127. Arg139 and Arg150 together coordinate AMP. An ATP-binding site is contributed by Ala178.

Belongs to the adenylate kinase family. As to quaternary structure, monomer.

It localises to the cytoplasm. The catalysed reaction is AMP + ATP = 2 ADP. The protein operates within purine metabolism; AMP biosynthesis via salvage pathway; AMP from ADP: step 1/1. Catalyzes the reversible transfer of the terminal phosphate group between ATP and AMP. Plays an important role in cellular energy homeostasis and in adenine nucleotide metabolism. This Brucella abortus (strain S19) protein is Adenylate kinase.